Reading from the N-terminus, the 305-residue chain is Aurasperone B biosynthesis cluster protein A (305 aa).

The first 26 residues, Met-1–Gly-26, serve as a signal peptide directing secretion. Residues Asn-29, Asn-34, Asn-64, Asn-83, Asn-132, Asn-183, Asn-218, and Asn-288 are each glycosylated (N-linked (GlcNAc...) asparagine).

Belongs to the bfoA family.

Its function is as follows. Part of the gene cluster that mediates the biosynthesis of aurasperone B, a dimeric gamma-naphthopyrone. The first step in the biosynthesis of aurasperone B is the production of gamma-naphthopyrone precursor YWA1 by the non-reducing polyketide synthase albA, via condensation of one acetyl-CoA starter unit with 6 malonyl-CoA units. YWA1 is then methylated by aunE at position C-6 to yield foncesin which is further methylated at position C-8 by aunD to produce fonsecin B. A key enzyme in the biosynthetic pathway is the cytochrome P450 monooxygenase aunB which catalyzes the oxidative dimerization of fonsecin B to aurasperone B. AunB also catalyzes the oxidative dimerization of rubrofusarin B into aurasperone A. In Aspergillus niger (strain ATCC 1015 / CBS 113.46 / FGSC A1144 / LSHB Ac4 / NCTC 3858a / NRRL 328 / USDA 3528.7), this protein is Aurasperone B biosynthesis cluster protein A.